A 129-amino-acid polypeptide reads, in one-letter code: D-ribose pyranase (129 aa).

His20 functions as the Proton donor in the catalytic mechanism. Substrate-binding positions include Asp28, His96, and 118–120; that span reads YAN.

Belongs to the RbsD / FucU family. RbsD subfamily. In terms of assembly, homodecamer.

It is found in the cytoplasm. It catalyses the reaction beta-D-ribopyranose = beta-D-ribofuranose. It participates in carbohydrate metabolism; D-ribose degradation; D-ribose 5-phosphate from beta-D-ribopyranose: step 1/2. Catalyzes the interconversion of beta-pyran and beta-furan forms of D-ribose. The polypeptide is D-ribose pyranase (Staphylococcus haemolyticus (strain JCSC1435)).